Here is a 257-residue protein sequence, read N- to C-terminus: 7-carboxy-7-deazaguanine synthase (257 aa).

Residues 29-31 (LQG) and arginine 44 contribute to the substrate site. The Radical SAM core domain maps to 35–253 (LAGTPSVFVR…PRLHVALWND (219 aa)). Residues cysteine 48, cysteine 52, and cysteine 55 each contribute to the [4Fe-4S] cluster site. Residue serine 57 coordinates Mg(2+). Substrate is bound at residue threonine 90. An S-adenosyl-L-methionine-binding site is contributed by glycine 92. The disordered stretch occupies residues 133–153 (VSPKLASSTPTAETDPKGDGE).

The protein belongs to the radical SAM superfamily. 7-carboxy-7-deazaguanine synthase family. Homodimer. Requires [4Fe-4S] cluster as cofactor. It depends on S-adenosyl-L-methionine as a cofactor. Mg(2+) is required as a cofactor.

The enzyme catalyses 6-carboxy-5,6,7,8-tetrahydropterin + H(+) = 7-carboxy-7-deazaguanine + NH4(+). It participates in purine metabolism; 7-cyano-7-deazaguanine biosynthesis. Catalyzes the complex heterocyclic radical-mediated conversion of 6-carboxy-5,6,7,8-tetrahydropterin (CPH4) to 7-carboxy-7-deazaguanine (CDG), a step common to the biosynthetic pathways of all 7-deazapurine-containing compounds. The sequence is that of 7-carboxy-7-deazaguanine synthase from Halobacterium salinarum (strain ATCC 29341 / DSM 671 / R1).